We begin with the raw amino-acid sequence, 186 residues long: Translation initiation factor IF-3 (186 aa).

The protein belongs to the IF-3 family. Monomer.

It localises to the cytoplasm. In terms of biological role, IF-3 binds to the 30S ribosomal subunit and shifts the equilibrium between 70S ribosomes and their 50S and 30S subunits in favor of the free subunits, thus enhancing the availability of 30S subunits on which protein synthesis initiation begins. This is Translation initiation factor IF-3 from Chlamydia caviae (strain ATCC VR-813 / DSM 19441 / 03DC25 / GPIC) (Chlamydophila caviae).